A 580-amino-acid chain; its full sequence is Peptidyl-prolyl cis-trans isomerase-like 2 (580 aa).

The region spanning 42–115 is the U-box domain; the sequence is KRLPFRFCSL…GEYIDPVTYK (74 aa). Disordered regions lie at residues 182 to 201, 227 to 259, 439 to 459, 479 to 530, and 553 to 580; these read IKEG…EDPS, QERA…SYQS, SPTL…RPTP, QKKQ…SSTT, and FVDE…SSWD. In terms of domain architecture, PPIase cyclophilin-type spans 309-468; it reads QKGYARISTT…PDIRIVDVTI (160 aa). Positions 439 to 457 are enriched in polar residues; that stretch reads SPTLNKLETHPVNPTTNRP. A compositionally biased stretch (basic and acidic residues) spans 490–507; that stretch reads EANRTAENDEEGSRRAED.

Belongs to the cyclophilin-type PPIase family. PPIL2 subfamily.

The protein localises to the nucleus. The catalysed reaction is [protein]-peptidylproline (omega=180) = [protein]-peptidylproline (omega=0). It carries out the reaction S-ubiquitinyl-[E2 ubiquitin-conjugating enzyme]-L-cysteine + [acceptor protein]-L-lysine = [E2 ubiquitin-conjugating enzyme]-L-cysteine + N(6)-ubiquitinyl-[acceptor protein]-L-lysine.. The protein operates within protein modification; protein ubiquitination. In terms of biological role, may catalyze the cis-trans isomerization of proline imidic peptide bonds in oligopeptides thereby assisting the folding of proteins. May also function as a chaperone, playing a role in intracellular transport of proteins. May also have a protein ubiquitin ligase activity acting as an E3 ubiquitin protein ligase or as a ubiquitin-ubiquitin ligase promoting elongation of ubiquitin chains on proteins. In Emericella nidulans (strain FGSC A4 / ATCC 38163 / CBS 112.46 / NRRL 194 / M139) (Aspergillus nidulans), this protein is Peptidyl-prolyl cis-trans isomerase-like 2 (cyp8).